Reading from the N-terminus, the 880-residue chain is DNA mismatch repair protein MutS (880 aa).

605 to 612 provides a ligand contact to ATP; that stretch reads GPNMSGKS. The disordered stretch occupies residues 790–829; that stretch reads QETAAVPSRGVEPPAPVIEPTPAKEQTPVKEQTTPLVEES. The span at 818 to 829 shows a compositional bias: polar residues; the sequence is VKEQTTPLVEES.

Belongs to the DNA mismatch repair MutS family.

Its function is as follows. This protein is involved in the repair of mismatches in DNA. It is possible that it carries out the mismatch recognition step. This protein has a weak ATPase activity. The sequence is that of DNA mismatch repair protein MutS from Limosilactobacillus fermentum (strain NBRC 3956 / LMG 18251) (Lactobacillus fermentum).